The primary structure comprises 265 residues: NAD kinase (265 aa).

D45 acts as the Proton acceptor in catalysis. NAD(+) contacts are provided by residues 45–46 (DG), 122–123 (NE), R148, D150, 161–166 (TAYSKS), and A185.

This sequence belongs to the NAD kinase family. It depends on a divalent metal cation as a cofactor.

Its subcellular location is the cytoplasm. The catalysed reaction is NAD(+) + ATP = ADP + NADP(+) + H(+). Involved in the regulation of the intracellular balance of NAD and NADP, and is a key enzyme in the biosynthesis of NADP. Catalyzes specifically the phosphorylation on 2'-hydroxyl of the adenosine moiety of NAD to yield NADP. This chain is NAD kinase, found in Lactobacillus delbrueckii subsp. bulgaricus (strain ATCC 11842 / DSM 20081 / BCRC 10696 / JCM 1002 / NBRC 13953 / NCIMB 11778 / NCTC 12712 / WDCM 00102 / Lb 14).